Consider the following 152-residue polypeptide: Antiholin-like protein LrgA (152 aa).

A run of 4 helical transmembrane segments spans residues Tyr-23–Glu-43, Phe-45–Cys-65, Val-77–Ile-97, and Ile-108–Ser-128.

Belongs to the CidA/LrgA family. LrgA subfamily.

It is found in the cell membrane. Inhibits the expression or activity of extracellular murein hydrolases by interacting, possibly with LrgB, with the holin-like proteins CidA and/or CidB. The LrgAB and CidAB proteins may affect the proton motive force of the membrane. May be involved in programmed cell death (PCD), possibly triggering PCD in response to antibiotics and environmental stresses. In Staphylococcus epidermidis (strain ATCC 12228 / FDA PCI 1200), this protein is Antiholin-like protein LrgA.